An 82-amino-acid polypeptide reads, in one-letter code: Cyclin-dependent protein kinase inhibitor SMR5 (82 aa).

The interval 1–26 (MEEKNYDDGDTVTVDDDYQMGCTTPT) is disordered. Residues 8–18 (DGDTVTVDDDY) are compositionally biased toward acidic residues.

As to quaternary structure, interacts with CDKA-1 and D-type cyclins. Expressed in columella cells in the roots and in root meristems after induction.

Probable cyclin-dependent protein kinase (CDK) inhibitor that functions as a repressor of mitosis in the endoreduplication cell cycle. Acts as a potent cell cycle inhibitor, regulating a hydroxyurea-dependent checkpoint in leaves. Essential to activate a high-light-dependent cell cycle checkpoint. This chain is Cyclin-dependent protein kinase inhibitor SMR5, found in Arabidopsis thaliana (Mouse-ear cress).